Consider the following 321-residue polypeptide: Lipoyl synthase (321 aa).

Residues Cys68, Cys73, Cys79, Cys94, Cys98, Cys101, and Ser308 each coordinate [4Fe-4S] cluster. The region spanning 80–297 (FNHGTATFMI…KAYADEIGFT (218 aa)) is the Radical SAM core domain.

This sequence belongs to the radical SAM superfamily. Lipoyl synthase family. It depends on [4Fe-4S] cluster as a cofactor.

Its subcellular location is the cytoplasm. The enzyme catalyses [[Fe-S] cluster scaffold protein carrying a second [4Fe-4S](2+) cluster] + N(6)-octanoyl-L-lysyl-[protein] + 2 oxidized [2Fe-2S]-[ferredoxin] + 2 S-adenosyl-L-methionine + 4 H(+) = [[Fe-S] cluster scaffold protein] + N(6)-[(R)-dihydrolipoyl]-L-lysyl-[protein] + 4 Fe(3+) + 2 hydrogen sulfide + 2 5'-deoxyadenosine + 2 L-methionine + 2 reduced [2Fe-2S]-[ferredoxin]. It functions in the pathway protein modification; protein lipoylation via endogenous pathway; protein N(6)-(lipoyl)lysine from octanoyl-[acyl-carrier-protein]: step 2/2. Its function is as follows. Catalyzes the radical-mediated insertion of two sulfur atoms into the C-6 and C-8 positions of the octanoyl moiety bound to the lipoyl domains of lipoate-dependent enzymes, thereby converting the octanoylated domains into lipoylated derivatives. This chain is Lipoyl synthase, found in Pseudoalteromonas translucida (strain TAC 125).